The following is a 380-amino-acid chain: ATPase ASNA1 homolog (380 aa).

Residue 48-55 (KGGVGKTT) participates in ATP binding. The active site involves D77. ATP-binding residues include E248 and N275.

Belongs to the arsA ATPase family. As to quaternary structure, homodimer.

The protein resides in the cytoplasm. Its subcellular location is the endoplasmic reticulum. ATPase required for the post-translational delivery of tail-anchored (TA) proteins to the endoplasmic reticulum. Recognizes and selectively binds the transmembrane domain of TA proteins in the cytosol. This complex then targets to the endoplasmic reticulum by membrane-bound receptors, where the tail-anchored protein is released for insertion. This process is regulated by ATP binding and hydrolysis. ATP binding drives the homodimer towards the closed dimer state, facilitating recognition of newly synthesized TA membrane proteins. ATP hydrolysis is required for insertion. Subsequently, the homodimer reverts towards the open dimer state, lowering its affinity for the membrane-bound receptor, and returning it to the cytosol to initiate a new round of targeting. This is ATPase ASNA1 homolog from Plasmodium chabaudi chabaudi.